The chain runs to 334 residues: DNA-directed RNA polymerase subunit alpha (334 aa).

The alpha N-terminal domain (alpha-NTD) stretch occupies residues 1–234 (MQTKVNELLK…SQLAAFVELQ (234 aa)). The interval 248–334 (IDPILLRPVD…LKDQDKKASG (87 aa)) is alpha C-terminal domain (alpha-CTD).

The protein belongs to the RNA polymerase alpha chain family. Homodimer. The RNAP catalytic core consists of 2 alpha, 1 beta, 1 beta' and 1 omega subunit. When a sigma factor is associated with the core the holoenzyme is formed, which can initiate transcription.

It catalyses the reaction RNA(n) + a ribonucleoside 5'-triphosphate = RNA(n+1) + diphosphate. DNA-dependent RNA polymerase catalyzes the transcription of DNA into RNA using the four ribonucleoside triphosphates as substrates. The sequence is that of DNA-directed RNA polymerase subunit alpha from Thioalkalivibrio sulfidiphilus (strain HL-EbGR7).